The primary structure comprises 213 residues: UPF0329 protein ECU04_0110 (213 aa).

This sequence belongs to the UPF0329 family.

The polypeptide is UPF0329 protein ECU04_0110 (Encephalitozoon cuniculi (strain GB-M1) (Microsporidian parasite)).